We begin with the raw amino-acid sequence, 474 residues long: MKIIHTAIEFAPVIKAGGLGDALYGLAKALAANHTTEVVIPLYPKLFTLPKEQDLCSIQKLSYFFAGEQEATAFSYFYEGIKVTLFKLDTQPELFENAETIYTSDDAFRFCAFSAAAASYIQKEGANIVHLHDWHTGLVAGLLKQQPCSQLQKIVLTLHNFGYRGYTTREILEASSLNEFYISQYQLFRDPQTCVLLKGALYCSDFVTTVSPTYAKEILEDYSDYEIHDAITARQHHLRGILNGIDTTIWGPETDPNLAKNYTKELFETPSIFFEAKAENKKALYERLGLSLEHSPCVCIISRIAEQKGPHFMKQAILHALENAYTLIIIGTCYGNQLHEEFANLQESLANSPNVRILLTYSDVLARQIFAAADMICIPSMFEPCGLTQMIGMRYGTVPLVRATGGLADTVANGINGFSFFNPHDFYEFRNMLLEAVTTYRTNHDKWQHIVRACLNFSSDLETAANKYLEIYKQ.

Position 15 (Lys15) interacts with ADP-alpha-D-glucose.

Belongs to the glycosyltransferase 1 family. Bacterial/plant glycogen synthase subfamily.

The catalysed reaction is [(1-&gt;4)-alpha-D-glucosyl](n) + ADP-alpha-D-glucose = [(1-&gt;4)-alpha-D-glucosyl](n+1) + ADP + H(+). It functions in the pathway glycan biosynthesis; glycogen biosynthesis. Functionally, synthesizes alpha-1,4-glucan chains using ADP-glucose. The polypeptide is Glycogen synthase (Chlamydia trachomatis serovar L2b (strain UCH-1/proctitis)).